We begin with the raw amino-acid sequence, 304 residues long: Dihydroorotate dehydrogenase B (NAD(+)), catalytic subunit (304 aa).

Residues Ser22 and 46-47 contribute to the FMN site; that span reads KG. Residues Lys46 and 70–74 each bind substrate; that span reads NSIGL. Asn100 and Asn128 together coordinate FMN. Residue Asn128 coordinates substrate. Residue Cys131 is the Nucleophile of the active site. FMN contacts are provided by Lys166 and Ile192. Residue 193-194 coordinates substrate; sequence NT. Residues Gly218, 244–245, and 266–267 each bind FMN; these read GG and GT.

Belongs to the dihydroorotate dehydrogenase family. Type 1 subfamily. Heterotetramer of 2 PyrK and 2 PyrD type B subunits. However, the metal reductase complex seems to be composed of a heterooctamer of 4 PyrK and 4 PyrD subunits. The cofactor is FMN.

It is found in the cytoplasm. It carries out the reaction (S)-dihydroorotate + NAD(+) = orotate + NADH + H(+). The protein operates within pyrimidine metabolism; UMP biosynthesis via de novo pathway; orotate from (S)-dihydroorotate (NAD(+) route): step 1/1. In terms of biological role, catalyzes the conversion of dihydroorotate to orotate with NAD(+) as electron acceptor. Together with PyrK, also forms a metal reductase complex able to reduce Fe(III)-chelates to Fe(II)-chelates, as well as soluble Cr(VI) and U(VI), using NADH as electron donor. To a lesser extent, can also use NADPH as an electron donor. Is unable to reduce riboflavin and FMN with NADH as electron donor. May have an in vivo role in metal reduction in D.reducens, which is an organism capable of reducing contaminant heavy metals and radionuclides. The chain is Dihydroorotate dehydrogenase B (NAD(+)), catalytic subunit (pyrD) from Desulforamulus reducens (strain ATCC BAA-1160 / DSM 100696 / MI-1) (Desulfotomaculum reducens).